Consider the following 383-residue polypeptide: Probable cell wall hydrolase LytN (383 aa).

A signal peptide spans 1 to 49 (MFVYYCKECFIMNKQQSKVRYSIRKVSIGILSISIGMFLALGMSNKAYA). The LysM domain occupies 175 to 219 (QIYTVKKGDTLSAIALKYKTTVSNIQNTNNIANPNLIFIGQKLKV). Residues 241–378 (NSSTLNYLKT…NYENDMIFIR (138 aa)) enclose the Peptidase C51 domain.

The protein localises to the secreted. In terms of biological role, probably involved in peptidoglycan hydrolysis. The sequence is that of Probable cell wall hydrolase LytN (lytN) from Staphylococcus aureus (strain MSSA476).